We begin with the raw amino-acid sequence, 388 residues long: GTPase Obg (388 aa).

Positions 1–159 constitute an Obg domain; the sequence is MKFVDEAVIR…RSLKLELLLL (159 aa). Residues 160 to 333 form the OBG-type G domain; the sequence is ADVGLLGMPN…LATKLLDFIQ (174 aa). Residues 166–173, 191–195, 213–216, 283–286, and 314–316 each bind GTP; these read GMPNAGKS, FTTLV, DIPG, NKAD, and SAY. Residues Ser173 and Thr193 each coordinate Mg(2+).

Belongs to the TRAFAC class OBG-HflX-like GTPase superfamily. OBG GTPase family. Monomer. Mg(2+) serves as cofactor.

It is found in the cytoplasm. Its function is as follows. An essential GTPase which binds GTP, GDP and possibly (p)ppGpp with moderate affinity, with high nucleotide exchange rates and a fairly low GTP hydrolysis rate. Plays a role in control of the cell cycle, stress response, ribosome biogenesis and in those bacteria that undergo differentiation, in morphogenesis control. This chain is GTPase Obg, found in Shewanella sp. (strain MR-4).